The sequence spans 147 residues: Large ribosomal subunit protein uL22c (147 aa).

The protein belongs to the universal ribosomal protein uL22 family. Part of the 50S ribosomal subunit.

The protein localises to the plastid. It is found in the chloroplast. In terms of biological role, this protein binds specifically to 23S rRNA. Functionally, the globular domain of the protein is located near the polypeptide exit tunnel on the outside of the subunit, while an extended beta-hairpin is found that lines the wall of the exit tunnel in the center of the 70S ribosome. The chain is Large ribosomal subunit protein uL22c (rpl22) from Lolium perenne (Perennial ryegrass).